The primary structure comprises 212 residues: tRNA (guanine-N(7)-)-methyltransferase (212 aa).

S-adenosyl-L-methionine is bound by residues glutamate 44, glutamate 69, aspartate 96, and aspartate 118. Aspartate 118 is a catalytic residue. Lysine 122 lines the substrate pocket. The interaction with RNA stretch occupies residues 124-129 (RHEKRR). Residues aspartate 154 and 192–195 (TEYE) contribute to the substrate site.

The protein belongs to the class I-like SAM-binding methyltransferase superfamily. TrmB family.

It catalyses the reaction guanosine(46) in tRNA + S-adenosyl-L-methionine = N(7)-methylguanosine(46) in tRNA + S-adenosyl-L-homocysteine. Its pathway is tRNA modification; N(7)-methylguanine-tRNA biosynthesis. Its function is as follows. Catalyzes the formation of N(7)-methylguanine at position 46 (m7G46) in tRNA. This is tRNA (guanine-N(7)-)-methyltransferase from Pediococcus pentosaceus (strain ATCC 25745 / CCUG 21536 / LMG 10740 / 183-1w).